Consider the following 535-residue polypeptide: Proto-oncogene tyrosine-protein kinase Src (535 aa).

Residues 1–56 (MGSNKSKPKDASQRRRSLEPSENVHGAGGAFPASQTPSKPASADGHRGPSAAFVPP) are disordered. The N-myristoyl glycine moiety is linked to residue Gly-2. Positions 7-19 (KPKDASQRRRSLE) are enriched in basic and acidic residues. Phosphoserine is present on residues Ser-17, Ser-21, and Ser-74. The region spanning 83-144 (GGVTTFVALY…PSNYVAPSDS (62 aa)) is the SH3 domain. Positions 150 to 247 (WYFGKITRRE…GLCHRLTTVC (98 aa)) constitute an SH2 domain. Residue Tyr-186 is modified to Phosphotyrosine. The 254-residue stretch at 269-522 (LRLEVKLGQG…YLQAFLEDYF (254 aa)) folds into the Protein kinase domain. Residues 275-283 (LGQGCFGEV) and Lys-297 contribute to the ATP site. The Proton acceptor role is filled by Asp-388. Tyr-418 carries the phosphotyrosine; by autocatalysis modification. Tyr-418 is modified (phosphotyrosine; by FAK2). At Tyr-529 the chain carries Phosphotyrosine; by CSK.

The protein belongs to the protein kinase superfamily. Tyr protein kinase family. SRC subfamily. Part of a complex comprised of PTPRA, BCAR1, BCAR3 (via SH2 domain) and SRC; the formation of the complex is dependent on integrin mediated-tyrosine phosphorylation of PTPRA. Interacts with CDCP1, TGFB1I1 and TOM1L2. Interacts with DDEF1/ASAP1 via its SH3 domain. Interacts with CCPG1. Interacts with the cytoplasmic domain of MUC1, phosphorylates it and increases binding of MUC1 with beta-catenin. Interacts with RALGPS1 via its SH3 domain. Interacts with CAV2 (tyrosine phosphorylated form). Interacts (via the SH3 domain and the protein kinase domain) with ARRB1; the interaction is independent of the phosphorylation state of SRC C-terminus. Interacts with FCAMR and PXN. Interacts with ARRB2. Interacts with ARRB1. Interacts with SRCIN1. Interacts with NDFIP2 and more weakly with NDFIP1. Interacts with PIK3CA and/or PIK3C2B, PTK2/FAK1, ESR1 (dimethylated on arginine) and FAK. Interacts (via SH2 and SH3 domain) with TNK2. Interacts (via protein kinase domain) with the tyrosine phosphorylated form of RUNX3 (via runt domain). Interacts with TRAF3 (via RING-type zinc finger domain). Interacts with RIGI, MAVS and TBK1. Interacts (via SH2 domain) with RACK1; the interaction is enhanced by tyrosine phosphorylation of RACK1 and inhibits SRC activity. Interacts (via SH2 domain) with the 'Tyr-402' phosphorylated form of PTK2B/PYK2. Interacts (via SH2 domain) with FLT3 (tyrosine phosphorylated). Identified in a complex containing FGFR4, NCAM1, CDH2, PLCG1, FRS2, SRC, SHC1, GAP43 and CTTN. Interacts with EPHB1; activates the MAPK/ERK cascade to regulate cell migration. Interacts with ERBB2 and STAT1. Interacts with PDGFRA (tyrosine phosphorylated). Interacts with CSF1R. Interacts (via SH2 domain) with the 'Tyr-9' phosphorylated form of PDPK1. Interacts with DDR2. Interacts with AMOTL2; this interaction regulates the translocation of phosphorylated SRC to peripheral cell-matrix adhesion sites. Interacts with DDR1 and DAB2. Interacts with TRAP1. Interacts with CBLC; the interaction is enhanced when SRC is phosphorylated at 'Tyr-424'. Interacts with ARHGEF5. Interacts (via cytoplasmic domain) with CEACAM1 (via SH2 domain); this interaction is regulated by trans-homophilic cell adhesion. Interacts with MPP2. Interacts with PRR7. Interacts (via kinase domain and to a lesser extent the SH2 domain) directly with PDLIM4; this interaction results in PTPN13-mediated dephosphorylation of this protein leading to its inactivation. Interacts with P85 (PIK3R1 or PIK3R2). Interacts with HNRNPA2B1. Interacts with IL6ST/gp130. Interacts (via SH3 domain) with PELP1 in the presence of 17-beta-estradiol. Interacts with AMBRA1. Post-translationally, myristoylated at Gly-2, and this is essential for targeting to membranes. In terms of processing, dephosphorylated at Tyr-529 by PTPRJ. Phosphorylated on Tyr-529 by c-Src kinase (CSK). The phosphorylated form is termed pp60c-src. Dephosphorylated by PTPRJ at Tyr-418. Normally maintained in an inactive conformation with the SH2 domain engaged with Tyr-529, the SH3 domain engaged with the SH2-kinase linker, and Tyr-418 dephosphorylated. Dephosphorylation of Tyr-529 as a result of protein tyrosine phosphatase (PTP) action disrupts the intramolecular interaction between the SH2 domain and Tyr-529, Tyr-418 can then become autophosphorylated, resulting in SRC activation. Phosphorylation of Tyr-529 by CSK allows this interaction to reform, resulting in SRC inactivation. CDK5-mediated phosphorylation at Ser-74 targets SRC to ubiquitin-dependent degradation and thus leads to cytoskeletal reorganization. Phosphorylated by PTK2/FAK1; this enhances kinase activity. Phosphorylated by PTK2B/PYK2; this enhances kinase activity. Upon activation of IL6ST by IL6, Tyr-418 is phosphorylated and Tyr-529 dephosphorylated. Displays reduced levels of autophosphorylation at Tyr-418 compared to isoform 2. Post-translationally, displays enhanced levels of autophosphorylation at Tyr-418 compared to isoform 1. In terms of processing, S-nitrosylation is important for activation of its kinase activity. Ubiquitinated in response to CDK5-mediated phosphorylation. Ubiquitination mediated by CBLC requires SRC autophosphorylation at Tyr-418 and may lead to lysosomal degradation.

It localises to the cell membrane. It is found in the mitochondrion inner membrane. The protein localises to the nucleus. The protein resides in the cytoplasm. Its subcellular location is the cytoskeleton. It localises to the perinuclear region. It is found in the cell junction. The protein localises to the focal adhesion. The catalysed reaction is L-tyrosyl-[protein] + ATP = O-phospho-L-tyrosyl-[protein] + ADP + H(+). With respect to regulation, phosphorylation by CSK at Tyr-529 inhibits kinase activity. Inhibitory phosphorylation at Tyr-529 is enhanced by heme. Further phosphorylation by CDK1 partially reactivates CSK-inactivated SRC and facilitates complete reactivation by protein tyrosine phosphatase PTPRC. Integrin engagement stimulates kinase activity. Phosphorylation by PTK2/FAK1 enhances kinase activity. Butein and pseudosubstrate-based peptide inhibitors like CIYKYYF act as inhibitors. Phosphorylation at Tyr-418 increases kinase activity. Non-receptor protein tyrosine kinase which is activated following engagement of many different classes of cellular receptors including immune response receptors, integrins and other adhesion receptors, receptor protein tyrosine kinases, G protein-coupled receptors as well as cytokine receptors. Participates in signaling pathways that control a diverse spectrum of biological activities including gene transcription, immune response, cell adhesion, cell cycle progression, apoptosis, migration, and transformation. Due to functional redundancy between members of the SRC kinase family, identification of the specific role of each SRC kinase is very difficult. SRC appears to be one of the primary kinases activated following engagement of receptors and plays a role in the activation of other protein tyrosine kinase (PTK) families. Receptor clustering or dimerization leads to recruitment of SRC to the receptor complexes where it phosphorylates the tyrosine residues within the receptor cytoplasmic domains. Plays an important role in the regulation of cytoskeletal organization through phosphorylation of specific substrates such as AFAP1. Phosphorylation of AFAP1 allows the SRC SH2 domain to bind AFAP1 and to localize to actin filaments. Cytoskeletal reorganization is also controlled through the phosphorylation of cortactin (CTTN). When cells adhere via focal adhesions to the extracellular matrix, signals are transmitted by integrins into the cell resulting in tyrosine phosphorylation of a number of focal adhesion proteins, including PTK2/FAK1 and paxillin (PXN). In addition to phosphorylating focal adhesion proteins, SRC is also active at the sites of cell-cell contact adherens junctions and phosphorylates substrates such as beta-catenin (CTNNB1), delta-catenin (CTNND1), and plakoglobin (JUP). Another type of cell-cell junction, the gap junction, is also a target for SRC, which phosphorylates connexin-43 (GJA1). SRC is implicated in regulation of pre-mRNA-processing and phosphorylates RNA-binding proteins such as KHDRBS1. Phosphorylates PKP3 at 'Tyr-195' in response to reactive oxygen species, which may cause the release of PKP3 from desmosome cell junctions into the cytoplasm. Also plays a role in PDGF-mediated tyrosine phosphorylation of both STAT1 and STAT3, leading to increased DNA binding activity of these transcription factors. Involved in the RAS pathway through phosphorylation of RASA1 and RASGRF1. Plays a role in EGF-mediated calcium-activated chloride channel activation. Required for epidermal growth factor receptor (EGFR) internalization through phosphorylation of clathrin heavy chain (CLTC and CLTCL1) at 'Tyr-1477'. Involved in beta-arrestin (ARRB1 and ARRB2) desensitization through phosphorylation and activation of GRK2, leading to beta-arrestin phosphorylation and internalization. Has a critical role in the stimulation of the CDK20/MAPK3 mitogen-activated protein kinase cascade by epidermal growth factor. Might be involved not only in mediating the transduction of mitogenic signals at the level of the plasma membrane but also in controlling progression through the cell cycle via interaction with regulatory proteins in the nucleus. Plays an important role in osteoclastic bone resorption in conjunction with PTK2B/PYK2. Both the formation of a SRC-PTK2B/PYK2 complex and SRC kinase activity are necessary for this function. Recruited to activated integrins by PTK2B/PYK2, thereby phosphorylating CBL, which in turn induces the activation and recruitment of phosphatidylinositol 3-kinase to the cell membrane in a signaling pathway that is critical for osteoclast function. Promotes energy production in osteoclasts by activating mitochondrial cytochrome C oxidase. Phosphorylates DDR2 on tyrosine residues, thereby promoting its subsequent autophosphorylation. Phosphorylates RUNX3 and COX2 on tyrosine residues, TNK2 on 'Tyr-284' and CBL on 'Tyr-738'. Enhances RIGI-elicited antiviral signaling. Phosphorylates PDPK1 at 'Tyr-9', 'Tyr-373' and 'Tyr-376'. Phosphorylates BCAR1 at 'Tyr-226'. Phosphorylates CBLC at multiple tyrosine residues, phosphorylation at 'Tyr-341' activates CBLC E3 activity. Phosphorylates synaptic vesicle protein synaptophysin (SYP). Involved in anchorage-independent cell growth. Required for podosome formation. Mediates IL6 signaling by activating YAP1-NOTCH pathway to induce inflammation-induced epithelial regeneration. Phosphorylates OTUB1, promoting deubiquitination of RPTOR. In terms of biological role, non-receptor protein tyrosine kinase which phosphorylates synaptophysin with high affinity. Its function is as follows. Non-receptor protein tyrosine kinase which shows higher basal kinase activity than isoform 1, possibly due to weakened intramolecular interactions which enhance autophosphorylation of Tyr-418 and subsequent activation. The SH3 domain shows reduced affinity with the linker sequence between the SH2 and kinase domains which may account for the increased basal activity. Displays altered substrate specificity compared to isoform 1, showing weak affinity for synaptophysin and for peptide substrates containing class I or class II SH3 domain-binding motifs. Plays a role in L1CAM-mediated neurite elongation, possibly by acting downstream of L1CAM to drive cytoskeletal rearrangements involved in neurite outgrowth. This chain is Proto-oncogene tyrosine-protein kinase Src, found in Mus musculus (Mouse).